A 148-amino-acid polypeptide reads, in one-letter code: D-aminoacyl-tRNA deacylase (148 aa).

The Gly-cisPro motif, important for rejection of L-amino acids motif lies at 137 to 138 (GP).

The protein belongs to the DTD family. As to quaternary structure, homodimer.

It localises to the cytoplasm. It catalyses the reaction glycyl-tRNA(Ala) + H2O = tRNA(Ala) + glycine + H(+). The catalysed reaction is a D-aminoacyl-tRNA + H2O = a tRNA + a D-alpha-amino acid + H(+). In terms of biological role, an aminoacyl-tRNA editing enzyme that deacylates mischarged D-aminoacyl-tRNAs. Also deacylates mischarged glycyl-tRNA(Ala), protecting cells against glycine mischarging by AlaRS. Acts via tRNA-based rather than protein-based catalysis; rejects L-amino acids rather than detecting D-amino acids in the active site. By recycling D-aminoacyl-tRNA to D-amino acids and free tRNA molecules, this enzyme counteracts the toxicity associated with the formation of D-aminoacyl-tRNA entities in vivo and helps enforce protein L-homochirality. The chain is D-aminoacyl-tRNA deacylase from Enterococcus faecalis (strain ATCC 700802 / V583).